The sequence spans 1320 residues: Centrosomin (1320 aa).

Residues 20 to 41 (ASFDVPRPPGGGNSPLPSQGRS) form a disordered region. Residues 97–516 (RKTVDVKMEL…SSQEKEIKKL (420 aa)) adopt a coiled-coil conformation. Residues 517 to 530 (NQENEQSANKENDC) show a composition bias toward basic and acidic residues. Residues 517-554 (NQENEQSANKENDCAKTVISPSSSGRSMSDNEASSQEM) form a disordered region. Residues 535–554 (ISPSSSGRSMSDNEASSQEM) are compositionally biased toward polar residues. Position 545 is a phosphoserine (Ser-545). 2 coiled-coil regions span residues 626 to 654 (EADLQQSFTEAEYMRALERNKLLQRKVDV) and 712 to 983 (NSLL…LKLA). The short motif at 644–656 (RNKLLQRKVDVLF) is the Nuclear localization signal element. Position 782 is a phosphothreonine (Thr-782). A Phosphoserine modification is found at Ser-785. The segment covering 810–823 (KKELEKRRSSEGQR) has biased composition (basic and acidic residues). Disordered stretches follow at residues 810 to 849 (KKELEKRRSSEGQRKERRSLPLPSQQFDNQSESEAWSEPD) and 863 to 893 (SNSLAAPEQAISESESEGRTCATRQDRNRNS). The span at 831 to 843 (LPSQQFDNQSESE) shows a compositional bias: polar residues. A phosphoserine mark is found at Ser-874, Ser-876, Ser-878, Ser-1191, Ser-1234, Ser-1237, and Ser-1239. Residues 1220 to 1249 (VEMKTEGSASPKAKSEESTSPDSKSNVATG) are disordered. Over residues 1237–1247 (STSPDSKSNVA) the composition is skewed to polar residues.

Monomer. In terms of tissue distribution, developing visceral mesoderm of the midgut, the central and peripheral nervous system, and developing gonads. Isoform J: Expressed in ovaries, testis and embryos. Isoform A: Expressed in testis only.

The protein localises to the cytoplasm. Its subcellular location is the cytoskeleton. The protein resides in the microtubule organizing center. It localises to the centrosome. It is found in the flagellum basal body. The protein localises to the perinuclear region. Core component of the centrosome throughout spermatogenesis. May participate in mitotic spindle assembly and the mechanics of morphogenesis through an interaction with microtubules, either directly or indirectly. Is a target of several homeotic genes. This chain is Centrosomin (cnn), found in Drosophila melanogaster (Fruit fly).